We begin with the raw amino-acid sequence, 66 residues long: Phylloseptin-S3 (66 aa).

The first 22 residues, Met1–Cys22, serve as a signal peptide directing secretion. Residues Glu23–Arg46 constitute a propeptide that is removed on maturation. Residues Glu25–Glu44 are disordered. Residues Glu30–Lys41 show a composition bias toward acidic residues. Phe65 is modified (phenylalanine amide).

It belongs to the frog skin active peptide (FSAP) family. Phylloseptin subfamily. As to expression, expressed by the skin glands.

The protein resides in the secreted. The protein localises to the target cell membrane. Its function is as follows. Antimicrobial peptide with activity against the Gram-positive S.pyogenes (MIC=12.5 uM), but not against all other bacteria tested (both Gram-positive and Gram-negative). Does not show activity against fungi, and against Leishmania species. This Phyllomedusa sauvagei (Sauvage's leaf frog) protein is Phylloseptin-S3.